The sequence spans 117 residues: Ribosome-binding factor A (117 aa).

Belongs to the RbfA family. In terms of assembly, monomer. Binds 30S ribosomal subunits, but not 50S ribosomal subunits or 70S ribosomes.

Its subcellular location is the cytoplasm. In terms of biological role, one of several proteins that assist in the late maturation steps of the functional core of the 30S ribosomal subunit. Associates with free 30S ribosomal subunits (but not with 30S subunits that are part of 70S ribosomes or polysomes). Required for efficient processing of 16S rRNA. May interact with the 5'-terminal helix region of 16S rRNA. This Streptococcus suis (strain 98HAH33) protein is Ribosome-binding factor A.